The primary structure comprises 413 residues: Palmitoyl-acyl carrier protein thioesterase, chloroplastic (413 aa).

Residues 1–57 (MVATAVTSAFFPVTSSPDSSDSKNKKLGSIKSKPSVSSGSLQVKANAQAPPKINGTV) constitute a chloroplast transit peptide. A disordered region spans residues 12 to 79 (PVTSSPDSSD…DGASSPPPRT (68 aa)). The span at 29 to 40 (SIKSKPSVSSGS) shows a compositional bias: low complexity. Catalysis depends on residues asparagine 310, histidine 312, and cysteine 347. The segment at 394-413 (WRPKHAKSSANMDQITAKRA) is disordered.

Belongs to the acyl-ACP thioesterase family.

The protein localises to the plastid. Its subcellular location is the chloroplast. It catalyses the reaction hexadecanoyl-[ACP] + H2O = hexadecanoate + holo-[ACP] + H(+). Its function is as follows. Plays an essential role in chain termination during de novo fatty acid synthesis. High thioesterase activity for palmitoyl-ACP versus other acyl-ACPs. The protein is Palmitoyl-acyl carrier protein thioesterase, chloroplastic (FATB1) of Gossypium hirsutum (Upland cotton).